A 931-amino-acid polypeptide reads, in one-letter code: Elicitor of plant defense protein 1 (931 aa).

Residues Asn-13–Pro-32 form a disordered region. One can recognise a uDENN domain in the interval Pro-19–Leu-277. Positions Glu-301–Gln-433 constitute a cDENN domain. Positions Ala-435–Ala-799 constitute a dDENN domain. 2 disordered regions span residues Leu-478 to Asp-552 and Ser-566 to Pro-586. Over residues Thr-521–Ser-537 the composition is skewed to polar residues. The span at Ser-566–Arg-575 shows a compositional bias: basic and acidic residues. The Phorbol-ester/DAG-type zinc finger occupies Gly-666–Cys-714.

It belongs to the EPD1 elicitor family.

It localises to the secreted. The protein localises to the host cell. Acts as an elicitor that triggers cell death and defense responses in the host plants. This Fusarium odoratissimum (strain NRRL 54006) protein is Elicitor of plant defense protein 1.